The sequence spans 108 residues: UPF0145 protein AF_0869 (108 aa).

Belongs to the UPF0145 family.

This chain is UPF0145 protein AF_0869, found in Archaeoglobus fulgidus (strain ATCC 49558 / DSM 4304 / JCM 9628 / NBRC 100126 / VC-16).